A 389-amino-acid polypeptide reads, in one-letter code: Protein WALLS ARE THIN 1 (389 aa).

The next 10 membrane-spanning stretches (helical) occupy residues 18–38 (LQLH…HVVS), 49–69 (LVFP…FAYF), 76–96 (PAIT…GITA), 111–131 (TFAS…AALL), 143–163 (GISK…ITLY), 198–218 (WTLG…WLVF), 230–250 (LSVT…IAAF), 266–286 (LFTI…VQIW), 294–314 (VFVA…ASIA), and 319–339 (FYLG…FVLY). 2 consecutive EamA domains span residues 32–161 (AGFH…SVIT) and 210–339 (LSWS…FVLY). Phosphoserine is present on serine 372.

It belongs to the drug/metabolite transporter (DMT) superfamily. Plant drug/metabolite exporter (P-DME) (TC 2.A.7.4) family. Mostly expressed in stems and hypocotyls, also present in seedlings, root, leaves, flowers and siliques. Ubiquitous, mostly expressed in vascular tissues and secondary wall-forming cells, including developing xylem vessels and fibers.

The protein resides in the vacuole membrane. Functionally, required for secondary wall formation in fibers, especially in short days conditions. Promotes indole metabolism and transport (e.g. tryptophan, neoglucobrassicin and auxin (indole-3-acetic acid)). May prevent salicylic-acid (SA) accumulation. The sequence is that of Protein WALLS ARE THIN 1 (WAT1) from Arabidopsis thaliana (Mouse-ear cress).